The primary structure comprises 214 residues: 3-isopropylmalate dehydratase small subunit (214 aa).

It belongs to the LeuD family. LeuD type 1 subfamily. In terms of assembly, heterodimer of LeuC and LeuD.

The enzyme catalyses (2R,3S)-3-isopropylmalate = (2S)-2-isopropylmalate. The protein operates within amino-acid biosynthesis; L-leucine biosynthesis; L-leucine from 3-methyl-2-oxobutanoate: step 2/4. Catalyzes the isomerization between 2-isopropylmalate and 3-isopropylmalate, via the formation of 2-isopropylmaleate. The chain is 3-isopropylmalate dehydratase small subunit from Nitrosococcus oceani (strain ATCC 19707 / BCRC 17464 / JCM 30415 / NCIMB 11848 / C-107).